The following is a 938-amino-acid chain: Isoleucine--tRNA ligase (938 aa).

A 'HIGH' region motif is present at residues 58 to 68; the sequence is PYANGSIHIGH. Glu-561 serves as a coordination point for L-isoleucyl-5'-AMP. Residues 602–606 carry the 'KMSKS' region motif; the sequence is KMSKS. Lys-605 contacts ATP. Zn(2+) is bound by residues Cys-901, Cys-904, Cys-921, and Cys-924.

Belongs to the class-I aminoacyl-tRNA synthetase family. IleS type 1 subfamily. Monomer. It depends on Zn(2+) as a cofactor.

It is found in the cytoplasm. The catalysed reaction is tRNA(Ile) + L-isoleucine + ATP = L-isoleucyl-tRNA(Ile) + AMP + diphosphate. In terms of biological role, catalyzes the attachment of isoleucine to tRNA(Ile). As IleRS can inadvertently accommodate and process structurally similar amino acids such as valine, to avoid such errors it has two additional distinct tRNA(Ile)-dependent editing activities. One activity is designated as 'pretransfer' editing and involves the hydrolysis of activated Val-AMP. The other activity is designated 'posttransfer' editing and involves deacylation of mischarged Val-tRNA(Ile). The protein is Isoleucine--tRNA ligase of Serratia proteamaculans (strain 568).